A 480-amino-acid polypeptide reads, in one-letter code: uncharacterized protein (480 aa).

The segment at residues 16-46 (CDRCRRRKIRCTGSDIPGQPCLACQKAHADC) is a DNA-binding region (zn(2)-C6 fungal-type). Over residues 298–307 (SFGASVSPKS) the composition is skewed to low complexity. A disordered region spans residues 298-325 (SFGASVSPKSTPGSNSTGAAVDTNSVHS). Residues 308-325 (TPGSNSTGAAVDTNSVHS) are compositionally biased toward polar residues.

Its subcellular location is the cytoplasm. It is found in the nucleus. This is an uncharacterized protein from Schizosaccharomyces pombe (strain 972 / ATCC 24843) (Fission yeast).